The primary structure comprises 414 residues: Esterase FrsA (414 aa).

Belongs to the FrsA family.

The enzyme catalyses a carboxylic ester + H2O = an alcohol + a carboxylate + H(+). Its function is as follows. Catalyzes the hydrolysis of esters. This chain is Esterase FrsA, found in Escherichia coli O81 (strain ED1a).